The sequence spans 204 residues: Tetraspanin-13 (204 aa).

Residues 1 to 19 (MVCGGFSCSKNCLCALNLL) are Cytoplasmic-facing. Residues 20 to 40 (YTLVSLLLIGIAAWGIGFGLI) form a helical membrane-spanning segment. Residues 41–44 (SSLR) are Extracellular-facing. The helical transmembrane segment at 45–65 (VVGVVIAVGIFLFLIALVGLI) threads the bilayer. Topologically, residues 66–72 (GAVKHHQ) are cytoplasmic. The helical transmembrane segment at 73 to 93 (VLLFFYMIILLLVFIVQFSVS) threads the bilayer. The Extracellular portion of the chain corresponds to 94-167 (CACLALNREQ…IGEYAGEVLR (74 aa)). 2 N-linked (GlcNAc...) asparagine glycosylation sites follow: N113 and N137. S143 bears the Phosphoserine mark. Residues 168-188 (FVGGIGLFFSFTEILGVWLTY) form a helical membrane-spanning segment. Residues 189–204 (RYRNQKDPRANPSAFL) are Cytoplasmic-facing.

Belongs to the tetraspanin (TM4SF) family.

Its subcellular location is the membrane. This Rattus norvegicus (Rat) protein is Tetraspanin-13 (Tspan13).